A 639-amino-acid chain; its full sequence is MLSARAAATAAAAAASPLWKRGEGGSSGSGSGCTSCREVRRRAAAVRVRAAAPRRVEAVAMESAAETEKKEEVAAAGGGVEDMATEEVPVTPWAFSVASGYTLLRDPHHNKGLAFSEKERDAHYLRGLLPPAVVSQDLQVKKIMHNLRQYSVPLQRYMAMMDLQERNERLFYKLLIDNVEELLPVVYTPTVGEACQKYGSIFRQPQGLYVSLKDKGKVLDVLRNWPERNIQVIVVTDGERILGLGDLGCQGMGIPVGKLSLYTALGGVRPSACLPITIDVGTNNEQLLNDEFYIGLRQRRATGKEYHELMEEFMSAVKQIYGEKVLIQFEDFANHNAFDLLAKYSKSHLVFNDDIQGTASVVLAGLLSSLKVVGGTLAEHTYLFLGAGEAGTGIAELIALEISKQTKAPIEECRKKVWLLDSKGLIVNSRKESLQAFKKPWAHEHEPVTTLLDAVQSIKPTVLIGTSGVGKTFTKEVIEAMASFNERPVIFSLSNPTSHSECTAEEAYNWSQGRAVFASGSPFDPVEYNGKIHVPGQSNNAYIFPGFGLGVVISGAVRVHEDMLLAASETLADQATQENFEKGSIFPPFTNIRKISARIAASVAAKAYELGLATRLPQPRDLEKYAESCMYTPVYRSYR.

Residues methionine 1 to arginine 49 constitute a chloroplast transit peptide. Positions alanine 15–threonine 34 are disordered. Residue tyrosine 187 is the Proton donor of the active site. Arginine 240 is an NAD(+) binding site. Catalysis depends on lysine 258, which acts as the Proton acceptor. 3 residues coordinate a divalent metal cation: glutamate 330, aspartate 331, and aspartate 354. NAD(+) is bound at residue aspartate 354. Residue leucine 383–alanine 399 coordinates NADP(+). Residue asparagine 495 participates in NAD(+) binding.

This sequence belongs to the malic enzymes family. Homotetramer. Mg(2+) is required as a cofactor. It depends on Mn(2+) as a cofactor.

It is found in the plastid. It localises to the chloroplast. The enzyme catalyses (S)-malate + NADP(+) = pyruvate + CO2 + NADPH. The catalysed reaction is oxaloacetate + H(+) = pyruvate + CO2. It participates in photosynthesis; C4 acid pathway. Its function is as follows. The chloroplastic ME isoform decarboxylates malate shuttled from neighboring mesophyll cells. The CO(2) released is then refixed by ribulose-bisphosphate carboxylase. This pathway eliminates the photorespiratory loss of CO(2) that occurs in most plants. This is NADP-dependent malic enzyme, chloroplastic (ME6) from Oryza sativa subsp. japonica (Rice).